The following is a 189-amino-acid chain: Interferon alpha-10 (189 aa).

Residues M1–G23 form the signal peptide. 2 disulfides stabilise this stretch: C24-C122 and C52-C162.

Belongs to the alpha/beta interferon family.

It localises to the secreted. In terms of biological role, produced by macrophages, IFN-alpha have antiviral activities. Interferon stimulates the production of two enzymes: a protein kinase and an oligoadenylate synthetase. The polypeptide is Interferon alpha-10 (IFNA10) (Homo sapiens (Human)).